The following is a 30-amino-acid chain: Photosystem I reaction center subunit XII (30 aa).

A helical transmembrane segment spans residues 6 to 26; that stretch reads VFTILAIALVPAVMAALLGSA.

This sequence belongs to the PsaM family.

It localises to the cellular thylakoid membrane. The polypeptide is Photosystem I reaction center subunit XII (Synechococcus sp. (strain JA-3-3Ab) (Cyanobacteria bacterium Yellowstone A-Prime)).